Consider the following 164-residue polypeptide: UPF0304 protein Asuc_0543 (164 aa).

It belongs to the UPF0304 family.

The chain is UPF0304 protein Asuc_0543 from Actinobacillus succinogenes (strain ATCC 55618 / DSM 22257 / CCUG 43843 / 130Z).